A 965-amino-acid polypeptide reads, in one-letter code: Phosphoenolpyruvate carboxylase (965 aa).

Serine 11 is modified (phosphoserine). Catalysis depends on residues histidine 173 and lysine 601.

The protein belongs to the PEPCase type 1 family. As to quaternary structure, homotetramer. It depends on Mg(2+) as a cofactor.

The protein localises to the cytoplasm. It carries out the reaction oxaloacetate + phosphate = phosphoenolpyruvate + hydrogencarbonate. The protein operates within photosynthesis; C3 acid pathway. By light-reversible phosphorylation. Its function is as follows. Through the carboxylation of phosphoenolpyruvate (PEP) it forms oxaloacetate, a four-carbon dicarboxylic acid source for the tricarboxylic acid cycle. The chain is Phosphoenolpyruvate carboxylase (PPC1) from Solanum tuberosum (Potato).